A 77-amino-acid chain; its full sequence is Acyl carrier protein (77 aa).

Positions 2–77 (SDVADRVKKI…DAVKFISEAS (76 aa)) constitute a Carrier domain. Ser-37 carries the O-(pantetheine 4'-phosphoryl)serine modification.

It belongs to the acyl carrier protein (ACP) family. In terms of processing, 4'-phosphopantetheine is transferred from CoA to a specific serine of apo-ACP by AcpS. This modification is essential for activity because fatty acids are bound in thioester linkage to the sulfhydryl of the prosthetic group.

The protein resides in the cytoplasm. It functions in the pathway lipid metabolism; fatty acid biosynthesis. Functionally, carrier of the growing fatty acid chain in fatty acid biosynthesis. This Ruegeria pomeroyi (strain ATCC 700808 / DSM 15171 / DSS-3) (Silicibacter pomeroyi) protein is Acyl carrier protein.